A 388-amino-acid chain; its full sequence is Probable nitrate transporter NarT (388 aa).

12 helical membrane-spanning segments follow: residues 14–34 (TLSL…MPMI), 45–65 (ISIV…PFGY), 69–89 (IIGA…PIFL), 98–118 (MLML…VGVT), 139–159 (GNLG…AIGW), 161–181 (STVR…FFLG), 206–226 (YYLS…GIFL), 242–262 (GIRA…GGII), 276–296 (FLFM…ILFT), 297–317 (VGCL…FKLV), 330–350 (GIVS…ITYV), and 359–379 (LAFI…WHLS).

The protein belongs to the major facilitator superfamily. Nitrate/nitrite porter (TC 2.A.1.8) family.

The protein localises to the cell membrane. In terms of biological role, probably required for nitrate uptake under anoxic conditions. Also possibly involved in excretion of nitrite produced by the dissimilatory reduction of nitrate. The sequence is that of Probable nitrate transporter NarT (narT) from Staphylococcus carnosus (strain TM300).